We begin with the raw amino-acid sequence, 190 residues long: Dynein axonemal light chain 1 (190 aa).

An N-acetylalanine modification is found at Ala-2. LRR repeat units lie at residues 49–70, 71–92, 94–115, and 116–137; these read NCEKLSLSTNCIEKIANLNGLK, NLRILSLGRNNIKNLNGLEAVG, TLEELWISYNFIEKLKGIHVMK, and KLKILYMSNNLVKDWAEFVKLA. Ser-56 is subject to Phosphoserine. The LRRCT domain maps to 150-190; the sequence is NPLEEKHSAEGNWVEEATKRVPKLKKLDGTPVIKEDEEEDN.

The protein belongs to the dynein light chain LC1-type family. Interacts with ZMYND10 (via C-terminus). Interacts with DNAH5, a outer arm dynein heavy chain. Interacts with tubulin located within the A-tubule of the outer doublets in a ATP-independent manner.

The protein localises to the cytoplasm. The protein resides in the cytoskeleton. It localises to the cilium axoneme. In terms of biological role, part of the multisubunit axonemal ATPase complexes that generate the force for cilia motility and govern beat frequency. Component of the outer arm dynein (ODA). May be involved in a mechanosensory feedback mechanism controlling ODA activity based on external conformational cues by tethering the outer arm dynein heavy chain (DNAH5) to the microtubule within the axoneme. Important for ciliary function in the airways and for the function of the cilia that produce the nodal flow essential for the determination of the left-right asymmetry. The protein is Dynein axonemal light chain 1 (DNAL1) of Bos taurus (Bovine).